The chain runs to 242 residues: Biosynthetic peptidoglycan transglycosylase (242 aa).

A helical transmembrane segment spans residues 19–39; it reads LMVVLAVFWGGGIALFSVAPV.

This sequence belongs to the glycosyltransferase 51 family.

The protein resides in the cell inner membrane. The enzyme catalyses [GlcNAc-(1-&gt;4)-Mur2Ac(oyl-L-Ala-gamma-D-Glu-L-Lys-D-Ala-D-Ala)](n)-di-trans,octa-cis-undecaprenyl diphosphate + beta-D-GlcNAc-(1-&gt;4)-Mur2Ac(oyl-L-Ala-gamma-D-Glu-L-Lys-D-Ala-D-Ala)-di-trans,octa-cis-undecaprenyl diphosphate = [GlcNAc-(1-&gt;4)-Mur2Ac(oyl-L-Ala-gamma-D-Glu-L-Lys-D-Ala-D-Ala)](n+1)-di-trans,octa-cis-undecaprenyl diphosphate + di-trans,octa-cis-undecaprenyl diphosphate + H(+). Its pathway is cell wall biogenesis; peptidoglycan biosynthesis. Its function is as follows. Peptidoglycan polymerase that catalyzes glycan chain elongation from lipid-linked precursors. The polypeptide is Biosynthetic peptidoglycan transglycosylase (Escherichia coli (strain ATCC 8739 / DSM 1576 / NBRC 3972 / NCIMB 8545 / WDCM 00012 / Crooks)).